The primary structure comprises 3357 residues: Versican core protein (3357 aa).

An N-terminal signal peptide occupies residues 1-23 (MLINMKGILWMCSTLLLTHALHQ). Residues 24–146 (AKMETSPPVK…EDTQDTMSLA (123 aa)) form the Ig-like V-type domain. 5 cysteine pairs are disulfide-bonded: Cys44–Cys130, Cys172–Cys243, Cys196–Cys217, Cys270–Cys333, and Cys294–Cys315. The N-linked (GlcNAc...) asparagine glycan is linked to Asn57. Link domains are found at residues 150–245 (VVFH…YCYV) and 251–347 (DVFH…YCFK). 3 N-linked (GlcNAc...) asparagine glycosylation sites follow: Asn330, Asn351, and Asn441. The interval 348 to 1308 (PKQNISEATT…IIEVRENKTG (961 aa)) is GAG-alpha (glucosaminoglycan attachment domain). Positions 625-634 (EPKTNGKVTE) are enriched in basic and acidic residues. Residues 625–646 (EPKTNGKVTEDEFGQSQPTTTF) form a disordered region. Residue Ser660 is glycosylated (O-linked (Xyl...) (chondroitin sulfate) serine). 2 disordered regions span residues 801 to 863 (WPGD…KPLE) and 881 to 908 (TSTSIGSAEKSASGEPTTGDRFLPTTST). Asn807 carries N-linked (GlcNAc...) asparagine glycosylation. Asn914 and Asn951 each carry an N-linked (GlcNAc...) asparagine glycan. 2 disordered regions span residues 1010-1088 (SPGA…YPPG) and 1252-1288 (DHMTSKPPVTQPTRPSVVERKTTSKTQELSTSTPAAG). Composition is skewed to polar residues over residues 1017–1042 (TGVSQGETQEEPQTPGSPFPTFSSTA) and 1275–1286 (SKTQELSTSTPA). Asn1305 and Asn1371 each carry an N-linked (GlcNAc...) asparagine glycan. Residues 1309-3051 (RLSDMIVSGH…VEGTAVYLPG (1743 aa)) are GAG-beta. Positions 1396–1406 (DPEAAEARRGQ) are enriched in basic and acidic residues. Disordered regions lie at residues 1396–1421 (DPEAAEARRGQYESVAPSQNFPDSSA) and 1458–1524 (TYPE…AIEQ). Composition is skewed to polar residues over residues 1411-1421 (APSQNFPDSSA) and 1487-1498 (WSESITESSPNL). O-linked (Xyl...) (chondroitin sulfate) serine glycans are attached at residues Ser1517 and Ser1599. The segment at 1664-1705 (LPSPDARPTTVWNSNSTSEWVSDKSFEGRKKKENEDEEGAVN) is disordered. The span at 1673–1683 (TVWNSNSTSEW) shows a compositional bias: polar residues. A glycan (N-linked (GlcNAc...) asparagine) is linked at Asn1678. A compositionally biased stretch (basic and acidic residues) spans 1684–1697 (VSDKSFEGRKKKEN). O-linked (Xyl...) (chondroitin sulfate) serine glycosylation is found at Ser1907 and Ser1931. The segment at 1926–1965 (VGMGGSDDERVRDTQTSSSIPTTSDNIYPVPDSKGPDSTV) is disordered. Positions 1939-1951 (TQTSSSIPTTSDN) are enriched in polar residues. The N-linked (GlcNAc...) asparagine glycan is linked to Asn2053. 2 O-linked (Xyl...) (chondroitin sulfate) serine glycosylation sites follow: Ser2219 and Ser2226. Residue Asn2243 is glycosylated (N-linked (GlcNAc...) asparagine). Residues 2308-2322 (TLSHTGTEEPTTSTL) show a composition bias toward polar residues. 2 disordered regions span residues 2308–2374 (TLSH…ATSP) and 2475–2494 (YPTSTLPSTEPYKSPSEGIE). A glycan (N-linked (GlcNAc...) asparagine) is linked at Asn2361. Positions 2475-2486 (YPTSTLPSTEPY) are enriched in low complexity. Ser2585 and Ser2586 each carry phosphoserine. N-linked (GlcNAc...) asparagine glycosylation is present at Asn2626. O-linked (Xyl...) (chondroitin sulfate) serine glycans are attached at residues Ser2696, Ser2697, and Ser2741. A disordered region spans residues 2853–2908 (LGGNVHRTEPPSMSRDPALDVSEDESKHKLLEELETSPTKPETSQDFPNKAKDHIP). The segment covering 2888–2899 (TSPTKPETSQDF) has biased composition (polar residues). Asn3029 carries N-linked (GlcNAc...) asparagine glycosylation. An EGF-like 1 domain is found at 3051-3087 (GPDLCKTNPCLNGGTCYPTETSYVCTCAPGYSGDQCE). 11 cysteine pairs are disulfide-bonded: Cys3055-Cys3066, Cys3060-Cys3075, Cys3077-Cys3086, Cys3093-Cys3104, Cys3098-Cys3113, Cys3115-Cys3124, Cys3131-Cys3142, Cys3159-Cys3251, Cys3227-Cys3243, Cys3258-Cys3301, and Cys3287-Cys3314. In terms of domain architecture, EGF-like 2; calcium-binding spans 3089–3125 (DFDECHSNPCRNGATCVDGFNTFRCLCLPSYVGALCE). One can recognise a C-type lectin domain in the interval 3138–3252 (FQGQCYKYFA…CNYHLTYTCK (115 aa)). Residues 3256–3316 (VACGQPPVVE…WAMPKITCMN (61 aa)) form the Sushi domain. 2 N-linked (GlcNAc...) asparagine glycosylation sites follow: Asn3331 and Asn3341. Over residues 3331-3342 (NSSSAKDNSINT) the composition is skewed to polar residues. The tract at residues 3331–3357 (NSSSAKDNSINTSKHEHRWSRRQETRR) is disordered.

The protein belongs to the aggrecan/versican proteoglycan family. Interacts with FBLN1. Post-translationally, phosphorylated by FAM20C in the extracellular medium. Proteolytically cleaved by ADAMTS5 and ADAMTS15 in the pericellular matrix surrounding myoblasts, facilitating myoblast contact and fusion which is required for skeletal muscle development and regeneration. As to expression, expressed in the retina (at protein level). Isoform V2: Only expressed in brain.

The protein resides in the secreted. It is found in the extracellular space. The protein localises to the extracellular matrix. It localises to the cell projection. Its subcellular location is the cilium. The protein resides in the photoreceptor outer segment. It is found in the interphotoreceptor matrix. In terms of biological role, may play a role in intercellular signaling and in connecting cells with the extracellular matrix. May take part in the regulation of cell motility, growth and differentiation. Binds hyaluronic acid. This is Versican core protein (Vcan) from Mus musculus (Mouse).